A 531-amino-acid chain; its full sequence is Sterol 26-hydroxylase, mitochondrial (531 aa).

The N-terminal 33 residues, 1 to 33 (MAALGCARLRWALRGAGRGLCPHGARAKAAIPA), are a transit peptide targeting the mitochondrion. The residue at position 283 (lysine 283) is an N6-acetyllysine. The sterol-binding stretch occupies residues 384–398 (PLLKAVLKETLRLYP). Cysteine 476 is a heme binding site. N6-acetyllysine is present on residues lysine 509 and lysine 520.

Belongs to the cytochrome P450 family. As to quaternary structure, interacts with HSP70; this interaction is required for initial targeting to mitochondria. Heme is required as a cofactor. Expressed in the neural retina and underlying retinal pigment epithelium (at protein level). Expressed in the gray and white matter of cerebellum (at protein level).

It localises to the mitochondrion inner membrane. The catalysed reaction is 5beta-cholestane-3alpha,7alpha,12alpha-triol + 6 reduced [adrenodoxin] + 3 O2 + 5 H(+) = (25R)-3alpha,7alpha,12alpha-trihydroxy-5beta-cholestan-26-oate + 6 oxidized [adrenodoxin] + 4 H2O. The enzyme catalyses cholestanol + 2 reduced [adrenodoxin] + O2 + 2 H(+) = (25R)-26-hydroxycholestanol + 2 oxidized [adrenodoxin] + H2O. It catalyses the reaction (25R)-3beta-hydroxycholest-5-en-7-one-26-al + 2 reduced [adrenodoxin] + O2 + H(+) = (25R)-3beta-hydroxycholest-5-en-7-one-26-oate + 2 oxidized [adrenodoxin] + H2O. It carries out the reaction (25R)-3beta,26-dihydroxycholest-5-en-7-one + 2 reduced [adrenodoxin] + O2 + 2 H(+) = (25R)-3beta-hydroxycholest-5-en-7-one-26-al + 2 oxidized [adrenodoxin] + 2 H2O. The catalysed reaction is 7-oxocholesterol + 2 reduced [adrenodoxin] + O2 + 2 H(+) = (25R)-3beta,26-dihydroxycholest-5-en-7-one + 2 oxidized [adrenodoxin] + H2O. The enzyme catalyses calciol + 2 reduced [adrenodoxin] + O2 + 2 H(+) = calcidiol + 2 oxidized [adrenodoxin] + H2O. It catalyses the reaction (25R)-5beta-cholestane-3alpha,7alpha,12alpha,26-tetrol + 2 reduced [adrenodoxin] + O2 + 2 H(+) = (25R)-3alpha,7alpha,12alpha-trihydroxy-5beta-cholestan-26-al + 2 oxidized [adrenodoxin] + 2 H2O. It carries out the reaction 2 reduced [adrenodoxin] + cholesterol + O2 + 2 H(+) = (25R)-cholest-5-ene-3beta,26-diol + 2 oxidized [adrenodoxin] + H2O. The catalysed reaction is (25R)-3beta,4beta-dihydroxycholest-5-en-26-al + 2 reduced [adrenodoxin] + O2 + H(+) = (25R)-3beta,4beta-dihydroxycholest-5-en-26-oate + 2 oxidized [adrenodoxin] + H2O. The enzyme catalyses (25R)-4beta,26-dihydroxycholesterol + 2 reduced [adrenodoxin] + O2 + 2 H(+) = (25R)-3beta,4beta-dihydroxycholest-5-en-26-al + 2 oxidized [adrenodoxin] + 2 H2O. It catalyses the reaction 4beta-hydroxycholesterol + 2 reduced [adrenodoxin] + O2 + 2 H(+) = (25R)-4beta,26-dihydroxycholesterol + 2 oxidized [adrenodoxin] + H2O. It carries out the reaction (25R)-3beta-hydroxy-5-cholesten-26-al + 2 reduced [adrenodoxin] + O2 + H(+) = (25R)-3beta-hydroxy-5-cholestenoate + 2 oxidized [adrenodoxin] + H2O. The catalysed reaction is (25R)-cholest-5-ene-3beta,26-diol + 2 reduced [adrenodoxin] + O2 + 2 H(+) = (25R)-3beta-hydroxy-5-cholesten-26-al + 2 oxidized [adrenodoxin] + 2 H2O. The enzyme catalyses (25R)-3alpha,7alpha,12alpha-trihydroxy-5beta-cholestan-26-al + 2 reduced [adrenodoxin] + O2 + H(+) = (25R)-3alpha,7alpha,12alpha-trihydroxy-5beta-cholestan-26-oate + 2 oxidized [adrenodoxin] + H2O. It catalyses the reaction 5beta-cholestane-3alpha,7alpha,12alpha-triol + 2 reduced [adrenodoxin] + O2 + 2 H(+) = (25R)-5beta-cholestane-3alpha,7alpha,12alpha,26-tetrol + 2 oxidized [adrenodoxin] + H2O. The protein operates within hormone biosynthesis; cholecalciferol biosynthesis. Its pathway is steroid metabolism; cholesterol degradation. It functions in the pathway lipid metabolism; bile acid biosynthesis. In terms of biological role, cytochrome P450 monooxygenase that catalyzes regio- and stereospecific hydroxylation of cholesterol and its derivatives. Hydroxylates (with R stereochemistry) the terminal methyl group of cholesterol side-chain in a three step reaction to yield at first a C26 alcohol, then a C26 aldehyde and finally a C26 acid. Regulates cholesterol homeostasis by catalyzing the conversion of excess cholesterol to bile acids via both the 'neutral' (classic) and the 'acid' (alternative) pathways. May also regulate cholesterol homeostasis via generation of active oxysterols, which act as ligands for NR1H2 and NR1H3 nuclear receptors, modulating the transcription of genes involved in lipid metabolism. Plays a role in cholestanol metabolism in the cerebellum. Similarly to cholesterol, hydroxylates cholestanol and may facilitate sterol diffusion through the blood-brain barrier to the systemic circulation for further degradation. Also hydroxylates retinal 7-ketocholesterol, a noxious oxysterol with pro-inflammatory and pro-apoptotic effects, and may play a role in its elimination from the retinal pigment epithelium. May play a redundant role in vitamin D biosynthesis. Catalyzes 25-hydroxylation of vitamin D3 that is required for its conversion to a functionally active form. The protein is Sterol 26-hydroxylase, mitochondrial of Homo sapiens (Human).